The chain runs to 88 residues: CRISPR-associated endoribonuclease Cas2 3 (88 aa).

Residue aspartate 9 participates in Mg(2+) binding.

This sequence belongs to the CRISPR-associated endoribonuclease Cas2 protein family. Homodimer, forms a heterotetramer with a Cas1 homodimer. The cofactor is Mg(2+).

Its function is as follows. CRISPR (clustered regularly interspaced short palindromic repeat), is an adaptive immune system that provides protection against mobile genetic elements (viruses, transposable elements and conjugative plasmids). CRISPR clusters contain sequences complementary to antecedent mobile elements and target invading nucleic acids. CRISPR clusters are transcribed and processed into CRISPR RNA (crRNA). Functions as a ssRNA-specific endoribonuclease. Involved in the integration of spacer DNA into the CRISPR cassette. The chain is CRISPR-associated endoribonuclease Cas2 3 from Thermodesulfovibrio yellowstonii (strain ATCC 51303 / DSM 11347 / YP87).